The following is a 347-amino-acid chain: Probable RNA methyltransferase Lcho_2507 (347 aa).

Glutamate 89 acts as the Proton acceptor in catalysis. Positions 92 to 318 (LLPRDGLCVS…TKLRQSAGQD (227 aa)) constitute a Radical SAM core domain. An intrachain disulfide couples cysteine 99 to cysteine 323. 3 residues coordinate [4Fe-4S] cluster: cysteine 106, cysteine 110, and cysteine 113. S-adenosyl-L-methionine-binding positions include 151-152 (GE), serine 181, 204-206 (SLH), and asparagine 280. Cysteine 323 serves as the catalytic S-methylcysteine intermediate.

It belongs to the radical SAM superfamily. RlmN family. It depends on [4Fe-4S] cluster as a cofactor.

Its subcellular location is the cytoplasm. This chain is Probable RNA methyltransferase Lcho_2507, found in Leptothrix cholodnii (strain ATCC 51168 / LMG 8142 / SP-6) (Leptothrix discophora (strain SP-6)).